A 451-amino-acid chain; its full sequence is Mannan endo-1,6-alpha-mannosidase DCW1 (451 aa).

The signal sequence occupies residues 1-21; that stretch reads MLAVTFTAAAVLSLLAASGRT. Residues Asn84, Asn109, Asn203, Asn242, Asn267, and Asn291 are each glycosylated (N-linked (GlcNAc...) asparagine). Positions 397–419 are disordered; that stretch reads AMNGGTSPGDPAAGTKTKAENLP. A lipid anchor (GPI-anchor amidated aspartate) is attached at Asp427. A propeptide spans 428-451 (removed in mature form); sequence RAGAGIITALIGSSFLACTLWLII.

It belongs to the glycosyl hydrolase 76 family.

The protein localises to the secreted. It localises to the cell wall. Its subcellular location is the cell membrane. The catalysed reaction is Random hydrolysis of (1-&gt;6)-alpha-D-mannosidic linkages in unbranched (1-&gt;6)-mannans.. In terms of biological role, required for normal synthesis of the cell wall. The protein is Mannan endo-1,6-alpha-mannosidase DCW1 (DCW1) of Eremothecium gossypii (strain ATCC 10895 / CBS 109.51 / FGSC 9923 / NRRL Y-1056) (Yeast).